The sequence spans 305 residues: Ornithine carbamoyltransferase (305 aa).

Carbamoyl phosphate-binding positions include 47–50 (STRT), R98, and 125–128 (HPCQ). L-ornithine is bound by residues N156, D221, and 225-226 (SM). Residues 262-263 (CL) and R290 contribute to the carbamoyl phosphate site.

It belongs to the aspartate/ornithine carbamoyltransferase superfamily. OTCase family.

The protein resides in the cytoplasm. It carries out the reaction carbamoyl phosphate + L-ornithine = L-citrulline + phosphate + H(+). It participates in amino-acid biosynthesis; L-arginine biosynthesis; L-arginine from L-ornithine and carbamoyl phosphate: step 1/3. Functionally, reversibly catalyzes the transfer of the carbamoyl group from carbamoyl phosphate (CP) to the N(epsilon) atom of ornithine (ORN) to produce L-citrulline. The chain is Ornithine carbamoyltransferase from Methanococcus vannielii (strain ATCC 35089 / DSM 1224 / JCM 13029 / OCM 148 / SB).